We begin with the raw amino-acid sequence, 566 residues long: Urease subunit alpha (566 aa).

The 438-residue stretch at 129 to 566 folds into the Urease domain; the sequence is GGVDTHIHFI…LPLAQRYFLF (438 aa). Residues histidine 134, histidine 136, and lysine 217 each contribute to the Ni(2+) site. Lysine 217 is subject to N6-carboxylysine. Substrate is bound at residue histidine 219. Ni(2+) contacts are provided by histidine 246 and histidine 272. Histidine 320 serves as the catalytic Proton donor. Aspartate 360 contributes to the Ni(2+) binding site.

Belongs to the metallo-dependent hydrolases superfamily. Urease alpha subunit family. Heterotrimer of UreA (gamma), UreB (beta) and UreC (alpha) subunits. Three heterotrimers associate to form the active enzyme. Requires Ni cation as cofactor. In terms of processing, carboxylation allows a single lysine to coordinate two nickel ions.

It is found in the cytoplasm. The enzyme catalyses urea + 2 H2O + H(+) = hydrogencarbonate + 2 NH4(+). It participates in nitrogen metabolism; urea degradation; CO(2) and NH(3) from urea (urease route): step 1/1. The polypeptide is Urease subunit alpha (Janthinobacterium sp. (strain Marseille) (Minibacterium massiliensis)).